The sequence spans 100 residues: Small ribosomal subunit protein uS14c (100 aa).

This sequence belongs to the universal ribosomal protein uS14 family. Part of the 30S ribosomal subunit.

The protein resides in the plastid. Its function is as follows. Binds 16S rRNA, required for the assembly of 30S particles. This is Small ribosomal subunit protein uS14c from Euglena longa (Euglenophycean alga).